The sequence spans 229 residues: Rab-like protein 2A (229 aa).

Residues 28 to 35 (GDSAVGKS), 76 to 80 (DTAGQ), and 133 to 136 (NKID) contribute to the GTP site. Positions 200–229 (NLEQEEEDVPDQEQSGSIETPSEEVASPHS) are disordered.

Belongs to the small GTPase superfamily. Rab family. As to quaternary structure, interacts with IFT27, IFT81, IFT172, ATP6V1E1, HK1, LDHC, MAPRE1 and HSPA2.

Plays an essential role in male fertility, sperm intra-flagellar transport, and tail assembly. Binds, in a GTP-regulated manner, to a specific set of effector proteins including key proteins involved in cilia development and function and delivers them into the growing sperm tail. The polypeptide is Rab-like protein 2A (RABL2A) (Pongo abelii (Sumatran orangutan)).